A 216-amino-acid polypeptide reads, in one-letter code: MPIQVVSADFAKTATRPEEWPRGATPEIAFVGRSNVGKSSMLNALARRKGLARVSSTPGRTRALQFFDLSYRPTPAARPRAIRFCDLPGYGYAKVARAERDRWTAMIEDYLRDRDVLRAVVLIVDARHPPSESDEDAAAFLVSAGRRLVVAATKTDKLPKARRVLALQQVERALGLARGDAVPFSAVEGTGTDALWARLAALAAEEPQTAEAEPPA.

The 182-residue stretch at 24 to 205 folds into the EngB-type G domain; that stretch reads ATPEIAFVGR…WARLAALAAE (182 aa). GTP is bound by residues 32–39, 59–63, 86–89, 153–156, and 184–186; these read GRSNVGKS, GRTRA, DLPG, TKTD, and FSA. Mg(2+) contacts are provided by Ser39 and Thr61.

This sequence belongs to the TRAFAC class TrmE-Era-EngA-EngB-Septin-like GTPase superfamily. EngB GTPase family. It depends on Mg(2+) as a cofactor.

Its function is as follows. Necessary for normal cell division and for the maintenance of normal septation. The polypeptide is Probable GTP-binding protein EngB (Anaeromyxobacter dehalogenans (strain 2CP-1 / ATCC BAA-258)).